A 225-amino-acid chain; its full sequence is UPF0758 protein Swoo_4561 (225 aa).

The 123-residue stretch at 102-224 (ILSDPDLTRD…IVSFAERGWI (123 aa)) folds into the MPN domain. Positions 173, 175, and 186 each coordinate Zn(2+). A JAMM motif motif is present at residues 173 to 186 (HNHPSGVAEPSHAD).

It belongs to the UPF0758 family.

The sequence is that of UPF0758 protein Swoo_4561 from Shewanella woodyi (strain ATCC 51908 / MS32).